The primary structure comprises 475 residues: Ataxin-10 (475 aa).

R10 is subject to Omega-N-methylarginine. A phosphoserine mark is found at S12 and S77. The residue at position 82 (T82) is a Phosphothreonine. S430 is modified (phosphoserine).

It belongs to the ataxin-10 family. Homooligomer. Interacts with GNB2. Interacts with IQCB1. Interacts with OGT. Polyubiquitinated. In terms of processing, phosphorylation at Ser-12 by AURKB promotes the association of ATXN10 with PLK1. Phosphorylation at Ser-77 and Thr-82 by PLK1 may play a role in the regulation of cytokinesis and may stimulate the proteasome-mediated degradation of ATXN10.

It is found in the cytoplasm. Its subcellular location is the perinuclear region. The protein localises to the midbody. The protein resides in the cytoskeleton. It localises to the cilium basal body. It is found in the microtubule organizing center. Its subcellular location is the centrosome. The protein localises to the centriole. In terms of biological role, may play a role in the regulation of cytokinesis. May play a role in signaling by stimulating protein glycosylation. Induces neuritogenesis by activating the Ras-MAP kinase pathway and is necessary for the survival of cerebellar neurons. Does not appear to play a major role in ciliogenesis. In Macaca fascicularis (Crab-eating macaque), this protein is Ataxin-10 (ATXN10).